Consider the following 353-residue polypeptide: MSSESSTGPEMSATTKQMLARVRQMVPPMLEKFHKGQLGRVAVIGGSEDYTGAPYFSAMASARLGADLSHVICTPNAAQVIKTYSPNLMVHPLMRSSPPALSSSDSGSSPSRTKSAPDTDPSQIAAQIIPMLDRLHVLVIGPGLGRDPLMQETCAKVITAAREKGIPMVLDADALLLVTKDPSLIKGYDNAVLTPNVVEFGRLTKALGVDEEVEKAEETAGETAKVEALAKALGGVMVVQKGAKDYLSDGKVTLTVDLKGGLKRSGGQGDTLTGSIATFLGWRRAYLEDLWDHGHKLNKEELIGLAVFGGSAITRECSRLAFAKKGRSLQASDLTDEVHTAFLNLFGEVDAKL.

In terms of domain architecture, YjeF C-terminal spans 18–345 (MLARVRQMVP…DEVHTAFLNL (328 aa)). Residues 95–121 (RSSPPALSSSDSGSSPSRTKSAPDTDP) form a disordered region. Low complexity predominate over residues 96-114 (SSPPALSSSDSGSSPSRTK). (6S)-NADPHX is bound by residues glycine 143 and 196–202 (NVVEFGR). ATP-binding positions include 241-245 (KGAKD) and 260-269 (GGLKRSGGQG). Aspartate 270 contacts (6S)-NADPHX.

This sequence belongs to the NnrD/CARKD family. Requires Mg(2+) as cofactor.

It is found in the cytoplasm. It carries out the reaction (6S)-NADHX + ATP = ADP + phosphate + NADH + H(+). The enzyme catalyses (6S)-NADPHX + ATP = ADP + phosphate + NADPH + H(+). Its function is as follows. Catalyzes the dehydration of the S-form of NAD(P)HX at the expense of ATP, which is converted to ADP. Together with NAD(P)HX epimerase, which catalyzes the epimerization of the S- and R-forms, the enzyme allows the repair of both epimers of NAD(P)HX, a damaged form of NAD(P)H that is a result of enzymatic or heat-dependent hydration. The chain is ATP-dependent (S)-NAD(P)H-hydrate dehydratase from Neurospora crassa (strain ATCC 24698 / 74-OR23-1A / CBS 708.71 / DSM 1257 / FGSC 987).